A 382-amino-acid polypeptide reads, in one-letter code: Type 2 DNA topoisomerase 6 subunit A (382 aa).

The Topo IIA-type catalytic domain maps to 14 to 155 (YDPQKVLKKL…MHITADRRGY (142 aa)). Tyr-108 functions as the O-(5'-phospho-DNA)-tyrosine intermediate in the catalytic mechanism. Glu-202 and Asp-254 together coordinate Mg(2+).

Belongs to the TOP6A family. In terms of assembly, homodimer. Heterotetramer of two Top6A and two Top6B chains. Requires Mg(2+) as cofactor.

It carries out the reaction ATP-dependent breakage, passage and rejoining of double-stranded DNA.. Functionally, relaxes both positive and negative superturns and exhibits a strong decatenase activity. The polypeptide is Type 2 DNA topoisomerase 6 subunit A (Pyrococcus horikoshii (strain ATCC 700860 / DSM 12428 / JCM 9974 / NBRC 100139 / OT-3)).